The chain runs to 783 residues: Cyclin-dependent kinase 11A (783 aa).

Positions 18–58 are enriched in basic and acidic residues; that stretch reads QEKKRRKEQEEKAEIKRLKNSDDRDSKRDSLEEGELRDHCM. The segment at 18–396 is disordered; it reads QEKKRRKEQE…SALTEGDYVP (379 aa). Ser47 and Ser72 each carry phosphoserine. Over residues 95 to 125 the composition is skewed to basic residues; it reads EKVHHRKDEKRKEKWKHARVKEREHERRKRH. Basic and acidic residues-rich tracts occupy residues 126–215, 226–241, and 252–264; these read REEQ…DKVK, PPRE…KPGE, and QLKE…RDLL. Ser271 carries the phosphoserine modification. Residues 279 to 290 are compositionally biased toward low complexity; it reads SAESSSAESGSG. Composition is skewed to acidic residues over residues 291–352 and 371–380; these read SEEE…EERE and ESEEAEEEVG. The Protein kinase domain occupies 427–647; sequence QCLNRIEEGT…VFKELGTPSE (221 aa). ATP-binding positions include 432 to 440 and Lys455; that span reads IEEGTYGVV. Residue Ser470 is modified to Phosphoserine; by CDK7. At Thr476 the chain carries Phosphothreonine; by CDK7. Residue Asp550 is the Proton acceptor of the active site. Ser577 carries the phosphoserine modification. Tyr582 is modified (phosphotyrosine). Phosphothreonine occurs at positions 583 and 739. The disordered stretch occupies residues 721–783; sequence SMFPTWPAKS…AAGPGFSLKF (63 aa). The residue at position 740 (Ser740) is a Phosphoserine.

The protein belongs to the protein kinase superfamily. CMGC Ser/Thr protein kinase family. CDC2/CDKX subfamily. In terms of assembly, the cleaved p110 isoform, p110C, binds to the serine/threonine kinase PAK1. The p58 isoform but not the p110 isoform or p110C interacts with CCND3. The p110 isoforms are found in large molecular weight complexes containing CCNL1 and SFRS7. Mg(2+) serves as cofactor. Post-translationally, during apoptosis, induced by Fas or tumor necrosis factor, specific CKD11 p110 isoforms are cleaved by caspases to produce a protein (p110C) that contains the C-terminal kinase domain of the CDK11 proteins. Expressed ubiquitously. Some evidence of isoform-specific tissue distribution.

Its subcellular location is the cytoplasm. The protein resides in the nucleus. The catalysed reaction is L-seryl-[protein] + ATP = O-phospho-L-seryl-[protein] + ADP + H(+). The enzyme catalyses L-threonyl-[protein] + ATP = O-phospho-L-threonyl-[protein] + ADP + H(+). Phosphorylation at Thr-436 or Tyr-437 inactivates the enzyme, while phosphorylation at Thr-583 activates it. Functionally, appears to play multiple roles in cell cycle progression, cytokinesis and apoptosis. The p110 isoforms have been suggested to be involved in pre-mRNA splicing, potentially by phosphorylating the splicing protein SFRS7. The p58 isoform may act as a negative regulator of normal cell cycle progression. This Homo sapiens (Human) protein is Cyclin-dependent kinase 11A (CDK11A).